Here is a 342-residue protein sequence, read N- to C-terminus: Ribosomal RNA small subunit methyltransferase C (342 aa).

The protein belongs to the methyltransferase superfamily. RsmC family. Monomer.

Its subcellular location is the cytoplasm. The enzyme catalyses guanosine(1207) in 16S rRNA + S-adenosyl-L-methionine = N(2)-methylguanosine(1207) in 16S rRNA + S-adenosyl-L-homocysteine + H(+). Its function is as follows. Specifically methylates the guanine in position 1207 of 16S rRNA in the 30S particle. In Shewanella sp. (strain MR-7), this protein is Ribosomal RNA small subunit methyltransferase C.